The sequence spans 158 residues: MLP-like protein 43 (158 aa).

At Ala2 the chain carries N-acetylalanine.

Belongs to the MLP family.

This chain is MLP-like protein 43 (MLP43), found in Arabidopsis thaliana (Mouse-ear cress).